We begin with the raw amino-acid sequence, 301 residues long: Acetyl-coenzyme A carboxylase carboxyl transferase subunit beta (301 aa).

In terms of domain architecture, CoA carboxyltransferase N-terminal spans 29–298; sequence LWVKCPETGQ…AEPAEEEAEP (270 aa).

Belongs to the AccD/PCCB family. In terms of assembly, acetyl-CoA carboxylase is a heterohexamer composed of biotin carboxyl carrier protein (AccB), biotin carboxylase (AccC) and two subunits each of ACCase subunit alpha (AccA) and ACCase subunit beta (AccD).

It is found in the cytoplasm. It catalyses the reaction N(6)-carboxybiotinyl-L-lysyl-[protein] + acetyl-CoA = N(6)-biotinyl-L-lysyl-[protein] + malonyl-CoA. It functions in the pathway lipid metabolism; malonyl-CoA biosynthesis; malonyl-CoA from acetyl-CoA: step 1/1. In terms of biological role, component of the acetyl coenzyme A carboxylase (ACC) complex. Biotin carboxylase (BC) catalyzes the carboxylation of biotin on its carrier protein (BCCP) and then the CO(2) group is transferred by the transcarboxylase to acetyl-CoA to form malonyl-CoA. The protein is Acetyl-coenzyme A carboxylase carboxyl transferase subunit beta of Methylobacterium nodulans (strain LMG 21967 / CNCM I-2342 / ORS 2060).